Here is a 210-residue protein sequence, read N- to C-terminus: Menaquinone reductase, multiheme cytochrome c subunit (210 aa).

Residues 20–40 form a helical membrane-spanning segment; that stretch reads GGAAPFFVGLVVALVFGWWAF. Heme-binding residues include C67, C70, H71, C88, C91, H92, C140, C143, H144, C152, C155, H156, C186, C189, H190, C205, C208, and H209.

Belongs to the multiheme cytochrome c family. The Qrc complex is composed of four subunits: QrcA, QrcB, QrcC and QrcD. Can form a supercomplex with the [NiFe] hydrogenase HynA1 and the tetraheme Type I cytochrome c3 TpIc(3), its physiological electron donors. It depends on heme c as a cofactor.

It localises to the cell inner membrane. Functionally, component of the respiratory Qrc complex, that catalyzes the reduction of the menaquinone pool using electrons transferred from the reduced periplasmic cytochrome c3, and which is probably involved in sulfate respiration. Is likely essential for growth on H(2) or formate since the periplasmic hydrogenases and/or formate dehydrogenases act as primary electron donors for the Qrc complex. This chain is Menaquinone reductase, multiheme cytochrome c subunit, found in Nitratidesulfovibrio vulgaris (strain ATCC 29579 / DSM 644 / CCUG 34227 / NCIMB 8303 / VKM B-1760 / Hildenborough) (Desulfovibrio vulgaris).